A 192-amino-acid polypeptide reads, in one-letter code: 3-hydroxyanthranilate 3,4-dioxygenase (192 aa).

Residue Arg50 coordinates O2. Residues His54, Glu60, and His102 each contribute to the Fe cation site. Position 60 (Glu60) interacts with substrate. Residues Arg106 and Glu116 each coordinate substrate. 4 residues coordinate a divalent metal cation: Cys131, Cys134, Cys168, and Cys171.

Belongs to the 3-HAO family. Requires Fe(2+) as cofactor.

The protein localises to the cytoplasm. The catalysed reaction is 3-hydroxyanthranilate + O2 = (2Z,4Z)-2-amino-3-carboxymuconate 6-semialdehyde. Its pathway is cofactor biosynthesis; NAD(+) biosynthesis; quinolinate from L-kynurenine: step 3/3. Functionally, catalyzes the oxidative ring opening of 3-hydroxyanthranilate to 2-amino-3-carboxymuconate semialdehyde, which spontaneously cyclizes to quinolinate. This chain is 3-hydroxyanthranilate 3,4-dioxygenase (bna1), found in Neosartorya fischeri (strain ATCC 1020 / DSM 3700 / CBS 544.65 / FGSC A1164 / JCM 1740 / NRRL 181 / WB 181) (Aspergillus fischerianus).